The sequence spans 417 residues: Gamma-glutamyl phosphate reductase (417 aa).

Belongs to the gamma-glutamyl phosphate reductase family.

The protein localises to the cytoplasm. It catalyses the reaction L-glutamate 5-semialdehyde + phosphate + NADP(+) = L-glutamyl 5-phosphate + NADPH + H(+). It functions in the pathway amino-acid biosynthesis; L-proline biosynthesis; L-glutamate 5-semialdehyde from L-glutamate: step 2/2. Catalyzes the NADPH-dependent reduction of L-glutamate 5-phosphate into L-glutamate 5-semialdehyde and phosphate. The product spontaneously undergoes cyclization to form 1-pyrroline-5-carboxylate. The protein is Gamma-glutamyl phosphate reductase of Escherichia coli (strain SMS-3-5 / SECEC).